Here is a 174-residue protein sequence, read N- to C-terminus: Large ribosomal subunit protein uL10 (174 aa).

It belongs to the universal ribosomal protein uL10 family. As to quaternary structure, part of the ribosomal stalk of the 50S ribosomal subunit. The N-terminus interacts with L11 and the large rRNA to form the base of the stalk. The C-terminus forms an elongated spine to which L12 dimers bind in a sequential fashion forming a multimeric L10(L12)X complex.

Forms part of the ribosomal stalk, playing a central role in the interaction of the ribosome with GTP-bound translation factors. This chain is Large ribosomal subunit protein uL10, found in Rubrobacter xylanophilus (strain DSM 9941 / JCM 11954 / NBRC 16129 / PRD-1).